The primary structure comprises 1287 residues: DNA-directed RNA polymerase 147 kDa polypeptide (1287 aa).

The protein belongs to the poxviridae DNA-directed RNA polymerase 147 kDa subunit family. As to quaternary structure, the DNA-dependent RNA polymerase used for intermediate and late genes expression consists of eight subunits Rpo30/OPG66, Rpo7/OPG90, Rpo22/OPG103, Rpo147/OPG105, Rpo18/OPG119, Rpo19/OPG131, Rpo132/OPG151 and Rpo35/OPG156. The same holoenzyme, with the addition of the transcription-specificity factor OPG109, is used for early gene expression.

Its subcellular location is the virion. It catalyses the reaction RNA(n) + a ribonucleoside 5'-triphosphate = RNA(n+1) + diphosphate. Functionally, part of the DNA-dependent RNA polymerase which catalyzes the transcription of viral DNA into RNA using the four ribonucleoside triphosphates as substrates. Responsible for the transcription of early, intermediate and late genes. DNA-dependent RNA polymerase associates with the early transcription factor (ETF), itself composed of OPG118 and OPG133, thereby allowing the early genes transcription. Late transcription, and probably also intermediate transcription, require newly synthesized RNA polymerase. The chain is DNA-directed RNA polymerase 147 kDa polypeptide (OPG105) from Bos taurus (Bovine).